Consider the following 118-residue polypeptide: Crustacean hyperglycemic hormones 2 (118 aa).

The N-terminal stretch at 1–22 is a signal peptide; that stretch reads MTAFRLVAVALVVVVACSTTWA. Cystine bridges form between Cys51-Cys87, Cys67-Cys83, and Cys70-Cys96. Val116 bears the Valine amide mark.

Belongs to the arthropod CHH/MIH/GIH/VIH hormone family.

The protein resides in the secreted. In terms of biological role, hormone found in the sinus gland of isopods and decapods which controls the blood sugar level. Has a secretagogue action over the amylase released from the midgut gland. May act as a stress hormone and may be involved in the control of molting and reproduction. The polypeptide is Crustacean hyperglycemic hormones 2 (CHH2) (Penaeus monodon (Giant tiger prawn)).